The chain runs to 685 residues: Protein argonaute (685 aa).

The interval 1–99 (MNHLGKTEVF…LYPKGRRPLD (99 aa)) is N-terminal domain. Residues 100–176 (PKDPGERSVL…VDPAYRILCE (77 aa)) are linker L1. Residues 169–265 (PAYRILCEMS…HLTGLLVPVL (97 aa)) form the PAZ domain. A linker L2 region spans residues 272–337 (EEEGSLALSL…SKPADALRVG (66 aa)). The mid domain stretch occupies residues 338–463 (FYRAQETALA…LLAKAGLQVV (126 aa)). The tract at residues 464-685 (ALSGAYPAEL…EVDREKLFFV (222 aa)) is PIWI domain. Active-site residues include aspartate 478, glutamate 512, aspartate 546, and aspartate 660. Residue aspartate 478 participates in Mn(2+) binding. The region spanning 507–671 (EAQAGERIPQ…LVKEVGRLGI (165 aa)) is the Piwi domain. Positions 546, 660, and 685 each coordinate Mn(2+).

The protein belongs to the argonaute family. Long pAgo subfamily. In terms of assembly, coimmunoprecipitates with a number of proteins involved in DNA replication or recombination including RepA (initiates replication), AddA/B (TT_C0638 and TT_C0639), ArgR, GyrA/B, HU (TT_C0984), PriA, Rad52 (TT_C1923), RecJ, SSB, TopA and UvrB. Most proteins remain associated with TtAgo after DNase treatment and associate with catalytically inactive protein. Mn(2+) serves as cofactor.

In terms of biological role, a DNA-guided ssDNA endonuclease. Uses short ssDNA sequences as guides (gDNA, also called small interfering DNA, siDNA) to bind complementary DNA target strands, resulting in cleavage of the target DNA (tDNA). The cleavage site is 10 nucleotides (nt) downstream of the target residue base-paired with the 5'-end of the gDNA. Plays a role in completion of DNA replication, participates in decatenating replicated DNA and plasmid. In situ purifies with 5'-phosphorylated long DNA (about 1160 nt, maps to the whole chromosome and plasmid), 25-35 nt RNAs that map to the whole chromosome and 15-18 nt DNA that maps to the replication terminus region (ter) on the chromosome and plasmid. Most short DNA starts with dC. Has been shown to have guide sequence-independent dsDNase activity called 'chopping', which requires unstable DNA (high AT-content, multiple mismatches or low salt conditions), and could be used to generate gDNA. Preferentially binds tDNA with dC at its 3'-terminus. Has also been shown to have no detectable guide sequence-independent dsDNase activity. The latter study proposes TtAgo may acquire gDNA from nicked dsDNA, by binding to 5'-phosphorylated-dC nicks, then cleaving 10 nt away on the opposite strand; subsequently an exonuclease (maybe AddA-AddB helicase/nuclease) trims the ends to generate the gDNA. Involved in defense against invading mobile genetic elements. TtAgo interferes with plasmid DNA, stimulates expression of specific endogenous genes, including various CRISPR loci and at least part of the CRISPR adaptation machinery, but only when exogenous plasmid DNA is present. Upon purification from E.coli associates with gDNA 13-25 nt long with 5'-phosphorylated ends and with 10-150 nt RNA with 5'-OH. DNA corresponds to the expression plasmid rather than chromosomal DNA; 89% of gDNA starts with dC and 72% has dA in the second position. Endonucleolytically cleaves tDNA with 5'-phosphorylated gDNA but not 5'-phosphorylated gRNA; the active site is involved in processing or binding of ssDNA. Nicks or linearizes supercoiled plasmid target when it has the appropriate gDNA sequences, does not cleave linear tDNA. Positions 4 to 16 of the tDNA need to be base paired to the gDNA for efficient tDNA cleavage. Although the system can support single nucleotide insertions in either the gDNA or tDNA, in all cases cleavage activity is reduced, with a wide range of sequence- and position-specific effects. Functionally, first characterized as a DNA-guided RNA endonuclease. Uses gDNA to bind complementary RNA target strands, resulting in cleavage of the target RNA. The cleavage site is 10 nucleotides (nt) downstream of the target residue base-paired with the 5'-end of the guide DNA. This Thermus thermophilus (strain ATCC BAA-163 / DSM 7039 / HB27) protein is Protein argonaute.